The following is a 218-amino-acid chain: Redox-sensing transcriptional repressor Rex (218 aa).

The H-T-H motif DNA-binding region spans 25–64; sequence WYLSYVQLLHADGCESVSSTRIARAVGVDASLVAKDLSYV. Position 99-104 (99-104) interacts with NAD(+); it reads GVGSLG.

The protein belongs to the transcriptional regulatory Rex family. In terms of assembly, homodimer.

Its subcellular location is the cytoplasm. Modulates transcription in response to changes in cellular NADH/NAD(+) redox state. The polypeptide is Redox-sensing transcriptional repressor Rex (Porphyromonas gingivalis (strain ATCC BAA-308 / W83)).